Consider the following 403-residue polypeptide: Octaketide synthase 2 (403 aa).

Residue cysteine 174 is part of the active site. Residues serine 281 and 318–321 contribute to the CoA site; that span reads GGRA.

This sequence belongs to the thiolase-like superfamily. Chalcone/stilbene synthases family. Homodimer.

The protein operates within secondary metabolite biosynthesis; flavonoid biosynthesis. Catalyzes the iterative condensations of 8 molecules of malonyl-CoA to produce aromatic octaketides, SEK4 and SEK4b, the products of the minimal polyketide synthase for the benzoisochromanequinone actinorhodin. May be involved in the biosynthesis of the octaketide barbaloin. The sequence is that of Octaketide synthase 2 (PKS4) from Aloe arborescens (Kidachi aloe).